A 282-amino-acid chain; its full sequence is 4-diphosphocytidyl-2-C-methyl-D-erythritol kinase (282 aa).

Lys11 is an active-site residue. 93-103 (LVSAGLAGGSA) serves as a coordination point for ATP. The active site involves Asp133.

This sequence belongs to the GHMP kinase family. IspE subfamily.

The catalysed reaction is 4-CDP-2-C-methyl-D-erythritol + ATP = 4-CDP-2-C-methyl-D-erythritol 2-phosphate + ADP + H(+). The protein operates within isoprenoid biosynthesis; isopentenyl diphosphate biosynthesis via DXP pathway; isopentenyl diphosphate from 1-deoxy-D-xylulose 5-phosphate: step 3/6. Catalyzes the phosphorylation of the position 2 hydroxy group of 4-diphosphocytidyl-2C-methyl-D-erythritol. This is 4-diphosphocytidyl-2-C-methyl-D-erythritol kinase from Ehrlichia canis (strain Jake).